Reading from the N-terminus, the 80-residue chain is UPF0291 protein YlaC (80 aa).

This sequence belongs to the UPF0291 family.

It localises to the cytoplasm. The sequence is that of UPF0291 protein YlaC (ylcA) from Lactococcus lactis subsp. lactis (strain IL1403) (Streptococcus lactis).